The chain runs to 402 residues: Ferredoxin--NADP reductase (402 aa).

Positions 18–74 (NRLFIYEVVGLGGDGRNENSLVRKSGTTFITVPYARMNQEMQRITKLGGKIVSIRPA) constitute a CpcD-like domain. The disordered stretch occupies residues 80–101 (IVSEGQSSAQASAQSPMASSTK). Residues 85–99 (QSSAQASAQSPMASS) show a composition bias toward low complexity. Positions 120 to 245 (KTPFLGKCIE…TGPVGKEMLL (126 aa)) constitute an FAD-binding FR-type domain. Residues 179–182 (RLYS), 200–202 (CVR), Tyr-206, 218–220 (VCS), and Thr-260 contribute to the FAD site. The NADP(+) site is built by Ser-182 and Arg-202. Residues Thr-260, 292–293 (VP), 322–323 (SR), Lys-332, 332–336 (KVYVQ), 361–362 (GL), and Glu-400 contribute to the NADP(+) site.

This sequence belongs to the ferredoxin--NADP reductase type 1 family. FAD serves as cofactor.

Its subcellular location is the cellular thylakoid membrane. It carries out the reaction 2 reduced [2Fe-2S]-[ferredoxin] + NADP(+) + H(+) = 2 oxidized [2Fe-2S]-[ferredoxin] + NADPH. In Picosynechococcus sp. (strain ATCC 27264 / PCC 7002 / PR-6) (Agmenellum quadruplicatum), this protein is Ferredoxin--NADP reductase (petH).